We begin with the raw amino-acid sequence, 507 residues long: Pre-glycoprotein polyprotein GP complex (507 aa).

A lipid anchor (N-myristoyl glycine; by host) is attached at glycine 2. The Extracellular portion of the chain corresponds to 2-17 (GQVVTFLQSLPEVINE). Residues 18 to 33 (AINIALIAISIICILK) form a helical membrane-spanning segment. At 34-58 (GLVNFWKCGVVQLAIFLCLAGRKCD) the chain is on the cytoplasmic side. A Zn(2+)-binding site is contributed by cysteine 57. Residues 59–445 (GLMIDRRHEL…QGKTPIALTD (387 aa)) lie on the Extracellular side of the membrane. 4 disulfide bridges follow: cysteine 86/cysteine 247, cysteine 292/cysteine 305, cysteine 314/cysteine 323, and cysteine 377/cysteine 398. N-linked (GlcNAc...) asparagine; by host glycans are attached at residues asparagine 89, asparagine 111, asparagine 179, and asparagine 240. N-linked (GlcNAc...) asparagine; by host glycans are attached at residues asparagine 378, asparagine 386, asparagine 403, and asparagine 408. Residues 446–466 (ICFWSLVFFTSTVFLQLVGIP) form a helical membrane-spanning segment. Topologically, residues 467 to 507 (THRHLVGEGCPKPHRITSNSLCACGYYKIPKRPTRWVRKGK) are cytoplasmic. 6 residues coordinate Zn(2+): histidine 468, histidine 470, cysteine 476, histidine 480, cysteine 488, and cysteine 490.

The protein belongs to the arenaviridae GPC protein family. In terms of assembly, interacts with glycoprotein G2. Part of the GP complex (GP-C) together with glycoprotein G1 and glycoprotein G2. The GP-complex interacts with protein Z, which interacts with ribonucleocapsid; these interactions may induce virion budding. As to quaternary structure, homotrimer; disulfide-linked. In pre-fusion state, G1 homotrimers bind G2 homotrimers via ionic interactions. Part of the GP complex (GP-C) together with glycoprotein G2 and the stable signal peptide. The GP-complex interacts with protein Z, which interacts with ribonucleocapsid; these interactions may induce virion budding. Homotrimer. Interacts with the stable signal peptide. In pre-fusion state, G2 homotrimers bind G1 homotrimers via ionic interactions. Part of the GP complex (GP-C) together with glycoprotein G1 and the stable signal peptide. Acidification in the endosome triggers rearrangements, which ultimately leads to a 6 helix bundle formed by the two heptad repeat domains (HR1 and HR2) in post-fusion state. The GP-complex interacts with protein Z, which interacts with ribonucleocapsid; these interactions may induce virion budding. Post-translationally, specific enzymatic cleavages in vivo yield mature proteins. GP-C polyprotein is cleaved in the endoplasmic reticulum by the host protease MBTPS1. Only cleaved glycoprotein is incorporated into virions. The SSP remains stably associated with the GP complex following cleavage by signal peptidase and plays crucial roles in the trafficking of GP through the secretory pathway. In terms of processing, myristoylation is necessary for GP2-mediated fusion activity.

Its subcellular location is the virion membrane. The protein resides in the host endoplasmic reticulum membrane. It localises to the host Golgi apparatus membrane. The protein localises to the host cell membrane. In terms of biological role, functions as a cleaved signal peptide that is retained as the third component of the GP complex (GP-C). Helps to stabilize the spike complex in its native conformation. The SSP is required for efficient glycoprotein expression, post-translational maturation cleavage of G1 and G2, glycoprotein transport to the cell surface plasma membrane, formation of infectious virus particles, and acid pH-dependent glycoprotein-mediated cell fusion. Functionally, forms the virion spikes together with glycoprotein G2. The glycoprotein spike trimers are connected to the underlying matrix. Interacts with the host receptor leading to virus endocytosis. Its function is as follows. Forms the virion spikes together with glycoprotein G1. The glycoprotein spike trimers are connected to the underlying matrix. Class I viral fusion protein that directs fusion of viral and host endosomal membranes, leading to delivery of the nucleocapsid into the cytoplasm. Membrane fusion is mediated by irreversible conformational changes induced by acidification. The polypeptide is Pre-glycoprotein polyprotein GP complex (Allpahuayo mammarenavirus (isolate Rat/Peru/CLHP-2472/1997) (ALLV)).